Here is a 561-residue protein sequence, read N- to C-terminus: Long-chain-fatty-acid--CoA ligase (561 aa).

Position 213–224 (Tyr213–Ala224) interacts with ATP.

It belongs to the ATP-dependent AMP-binding enzyme family. Requires Mg(2+) as cofactor.

The protein localises to the membrane. The catalysed reaction is a long-chain fatty acid + ATP + CoA = a long-chain fatty acyl-CoA + AMP + diphosphate. It functions in the pathway lipid metabolism; fatty acid beta-oxidation. Its function is as follows. Catalyzes the esterification, concomitant with transport, of exogenous long-chain fatty acids into metabolically active CoA thioesters for subsequent degradation or incorporation into phospholipids. This Salmonella typhi protein is Long-chain-fatty-acid--CoA ligase (fadD).